The sequence spans 118 residues: V-type proton ATPase subunit G 2 (118 aa).

A disordered region spans residues 23 to 90; it reads ADARKRKARR…VQGMQSSQQR (68 aa). Residues 35 to 55 are compositionally biased toward basic and acidic residues; sequence QAKEEAQMEVEQYRREREQEF. Polar residues-rich tracts occupy residues 56–69 and 78–89; these read QSKQQAAMGSQGNL and RRQVQGMQSSQQ.

Belongs to the V-ATPase G subunit family. V-ATPase is a heteromultimeric enzyme made up of two complexes: the ATP-hydrolytic V1 complex and the proton translocation V0 complex. The V1 complex consists of three catalytic AB heterodimers that form a heterohexamer, three peripheral stalks each consisting of EG heterodimers, one central rotor including subunits D and F, and the regulatory subunits C and H. The proton translocation complex V0 consists of the proton transport subunit a, a ring of proteolipid subunits c9c'', rotary subunit d, subunits e and f, and the accessory subunits ATP6AP1/Ac45 and ATP6AP2/PRR.

It localises to the melanosome. It is found in the cytoplasmic vesicle. The protein resides in the clathrin-coated vesicle membrane. Subunit of the V1 complex of vacuolar(H+)-ATPase (V-ATPase), a multisubunit enzyme composed of a peripheral complex (V1) that hydrolyzes ATP and a membrane integral complex (V0) that translocates protons. V-ATPase is responsible for acidifying and maintaining the pH of intracellular compartments and in some cell types, is targeted to the plasma membrane, where it is responsible for acidifying the extracellular environment. This Macaca mulatta (Rhesus macaque) protein is V-type proton ATPase subunit G 2 (ATP6V1G2).